The chain runs to 88 residues: Small ribosomal subunit protein bS20 (88 aa).

Disordered regions lie at residues 1–23 (MANTTSAKKATRKIARRSAVNKA) and 65–88 (GVMHSNTASRKVSRLAQRVKSLSA).

It belongs to the bacterial ribosomal protein bS20 family.

Binds directly to 16S ribosomal RNA. The sequence is that of Small ribosomal subunit protein bS20 from Rhizobium meliloti (strain 1021) (Ensifer meliloti).